A 129-amino-acid polypeptide reads, in one-letter code: D-ribose pyranase (129 aa).

H20 (proton donor) is an active-site residue. Substrate contacts are provided by residues D28, H96, and 118–120; that span reads YAN.

This sequence belongs to the RbsD / FucU family. RbsD subfamily. Homodecamer.

It localises to the cytoplasm. It carries out the reaction beta-D-ribopyranose = beta-D-ribofuranose. It functions in the pathway carbohydrate metabolism; D-ribose degradation; D-ribose 5-phosphate from beta-D-ribopyranose: step 1/2. Catalyzes the interconversion of beta-pyran and beta-furan forms of D-ribose. In Halalkalibacterium halodurans (strain ATCC BAA-125 / DSM 18197 / FERM 7344 / JCM 9153 / C-125) (Bacillus halodurans), this protein is D-ribose pyranase.